A 142-amino-acid chain; its full sequence is 3-hydroxyacyl-[acyl-carrier-protein] dehydratase FabZ (142 aa).

Histidine 50 is an active-site residue.

This sequence belongs to the thioester dehydratase family. FabZ subfamily.

Its subcellular location is the cytoplasm. It catalyses the reaction a (3R)-hydroxyacyl-[ACP] = a (2E)-enoyl-[ACP] + H2O. In terms of biological role, involved in unsaturated fatty acids biosynthesis. Catalyzes the dehydration of short chain beta-hydroxyacyl-ACPs and long chain saturated and unsaturated beta-hydroxyacyl-ACPs. This is 3-hydroxyacyl-[acyl-carrier-protein] dehydratase FabZ from Clostridium tetani (strain Massachusetts / E88).